The chain runs to 261 residues: Glucose 1-dehydrogenase (261 aa).

Position 11–35 (11–35) interacts with NADP(+); the sequence is VITGSSTGLGKSMAIRFATEKAKVV. Ser145 is a substrate binding site. The active-site Proton acceptor is Tyr158.

This sequence belongs to the short-chain dehydrogenases/reductases (SDR) family. Homotetramer.

The enzyme catalyses D-glucose + NAD(+) = D-glucono-1,5-lactone + NADH + H(+). The catalysed reaction is D-glucose + NADP(+) = D-glucono-1,5-lactone + NADPH + H(+). The polypeptide is Glucose 1-dehydrogenase (Priestia megaterium (Bacillus megaterium)).